The chain runs to 290 residues: 4-hydroxy-tetrahydrodipicolinate synthase (290 aa).

Position 44 (Thr-44) interacts with pyruvate. The Proton donor/acceptor role is filled by Tyr-132. Lys-160 functions as the Schiff-base intermediate with substrate in the catalytic mechanism. A pyruvate-binding site is contributed by Ile-202.

The protein belongs to the DapA family. In terms of assembly, homotetramer; dimer of dimers.

The protein localises to the cytoplasm. It carries out the reaction L-aspartate 4-semialdehyde + pyruvate = (2S,4S)-4-hydroxy-2,3,4,5-tetrahydrodipicolinate + H2O + H(+). Its pathway is amino-acid biosynthesis; L-lysine biosynthesis via DAP pathway; (S)-tetrahydrodipicolinate from L-aspartate: step 3/4. Its function is as follows. Catalyzes the condensation of (S)-aspartate-beta-semialdehyde [(S)-ASA] and pyruvate to 4-hydroxy-tetrahydrodipicolinate (HTPA). This Legionella pneumophila subsp. pneumophila (strain Philadelphia 1 / ATCC 33152 / DSM 7513) protein is 4-hydroxy-tetrahydrodipicolinate synthase.